The sequence spans 178 residues: MPTSSATPAILPIAAVSQLAFRDAMSGLAAAVNLITTDGPGGRAGFTATAVCSVTDQPPTLLVCINRSASVYDAFIENGTLCVNTLGNGQQDLSNLFGGKSSQQERFAGGQWEAGVTGAPVLDSAKLALDCKVSQSVSVGTHDILFCEVVDIRHQSGADALVYFGRRYHHLPSETPAA.

This sequence belongs to the non-flavoprotein flavin reductase family. RutF subfamily.

The enzyme catalyses FMNH2 + NAD(+) = FMN + NADH + 2 H(+). In terms of biological role, catalyzes the reduction of FMN to FMNH2 which is used to reduce pyrimidine by RutA via the Rut pathway. The polypeptide is FMN reductase (NADH) RutF (Pseudomonas syringae pv. syringae (strain B728a)).